A 599-amino-acid polypeptide reads, in one-letter code: Elongation factor 4 (599 aa).

The tr-type G domain occupies 2 to 184 (KHIRNFSIIA…RLVRDIPPPE (183 aa)). GTP is bound by residues 14-19 (DHGKST) and 131-134 (NKID).

It belongs to the TRAFAC class translation factor GTPase superfamily. Classic translation factor GTPase family. LepA subfamily.

Its subcellular location is the cell inner membrane. The catalysed reaction is GTP + H2O = GDP + phosphate + H(+). Functionally, required for accurate and efficient protein synthesis under certain stress conditions. May act as a fidelity factor of the translation reaction, by catalyzing a one-codon backward translocation of tRNAs on improperly translocated ribosomes. Back-translocation proceeds from a post-translocation (POST) complex to a pre-translocation (PRE) complex, thus giving elongation factor G a second chance to translocate the tRNAs correctly. Binds to ribosomes in a GTP-dependent manner. The sequence is that of Elongation factor 4 from Pectobacterium carotovorum subsp. carotovorum (strain PC1).